Here is a 467-residue protein sequence, read N- to C-terminus: Argininosuccinate lyase (467 aa).

It belongs to the lyase 1 family. Argininosuccinate lyase subfamily.

It is found in the cytoplasm. It carries out the reaction 2-(N(omega)-L-arginino)succinate = fumarate + L-arginine. The protein operates within amino-acid biosynthesis; L-arginine biosynthesis; L-arginine from L-ornithine and carbamoyl phosphate: step 3/3. The sequence is that of Argininosuccinate lyase from Chromohalobacter salexigens (strain ATCC BAA-138 / DSM 3043 / CIP 106854 / NCIMB 13768 / 1H11).